The following is a 557-amino-acid chain: Ribonuclease J 2 (557 aa).

Zn(2+) contacts are provided by histidine 76, histidine 78, histidine 144, and glutamate 166. 366–370 (HASSH) lines the substrate pocket.

It belongs to the metallo-beta-lactamase superfamily. RNA-metabolizing metallo-beta-lactamase-like family. Bacterial RNase J subfamily. Homodimer, may be a subunit of the RNA degradosome. It depends on Zn(2+) as a cofactor.

It localises to the cytoplasm. Functionally, an RNase that has 5'-3' exonuclease and possibly endoonuclease activity. Involved in maturation of rRNA and in some organisms also mRNA maturation and/or decay. The chain is Ribonuclease J 2 from Staphylococcus saprophyticus subsp. saprophyticus (strain ATCC 15305 / DSM 20229 / NCIMB 8711 / NCTC 7292 / S-41).